A 102-amino-acid chain; its full sequence is Matrix Gla protein (102 aa).

Phosphoserine is present on residues Ser2, Ser3, and Ser5. The tract at residues 18–45 (DANSFMRQPRPPNHWDSRDRFKSPRERT) is disordered. The 47-residue stretch at 27–73 (RPPNHWDSRDRFKSPRERTREKCEEYRPCERLARQVGLKRAYGKYFG) folds into the Gla domain. A compositionally biased stretch (basic and acidic residues) spans 30–45 (NHWDSRDRFKSPRERT). Residues Glu43, Glu47, Glu50, and Glu51 each carry the 4-carboxyglutamate modification. Cys49 and Cys55 are oxidised to a cystine. Positions 72–102 (FGNRRQRPSTSGRLRPRKYRASRYRNHHYRY) are disordered. Residues 85 to 102 (LRPRKYRASRYRNHHYRY) show a composition bias toward basic residues.

Belongs to the osteocalcin/matrix Gla protein family. Requires vitamin K-dependent gamma-carboxylation for its function. Accounts for 35-40% of the total protein in the acid demineralization extract of calcified cartilage.

The protein resides in the secreted. Its function is as follows. Associates with the organic matrix of calcified cartilage. The protein is Matrix Gla protein (mgp) of Galeorhinus galeus (Tope shark).